Consider the following 387-residue polypeptide: Krueppel-like factor 17 (387 aa).

Disordered regions lie at residues 28-54 (FLDM…IRRV), 213-234 (SRDP…PLES), and 257-277 (RREA…SPVS). Polar residues predominate over residues 30–46 (DMSSSPGSGGVHTSWNR). Positions 257 to 270 (RREAQNSRAQERAS) are enriched in basic and acidic residues. 3 consecutive C2H2-type zinc fingers follow at residues 280 to 304 (YHCE…QRKH), 310 to 334 (YKCT…TRIH), and 340 to 362 (HKCD…QRTH). The tract at residues 357–387 (QHQRTHMRMPRSPDPQADSGRRAGPLPAPHL) is disordered.

It belongs to the Sp1 C2H2-type zinc-finger protein family.

The protein resides in the nucleus. In terms of biological role, transcription repressor that binds to the promoter of target genes and prevents their expression. Acts as a negative regulator of epithelial-mesenchymal transition and metastasis in breast cancer. Specifically binds the 5'-CACCC-3' sequence in the promoter of ID1, a key metastasis regulator in breast cancer, and repress its expression. May be a germ cell-specific transcription factor that plays important roles in spermatid differentiation and oocyte development. In Sus scrofa (Pig), this protein is Krueppel-like factor 17 (KLF17).